A 468-amino-acid polypeptide reads, in one-letter code: UDP-N-acetylmuramate--L-alanine ligase (468 aa).

107–113 (GTHGKTT) is an ATP binding site.

It belongs to the MurCDEF family.

Its subcellular location is the cytoplasm. The enzyme catalyses UDP-N-acetyl-alpha-D-muramate + L-alanine + ATP = UDP-N-acetyl-alpha-D-muramoyl-L-alanine + ADP + phosphate + H(+). Its pathway is cell wall biogenesis; peptidoglycan biosynthesis. In terms of biological role, cell wall formation. This is UDP-N-acetylmuramate--L-alanine ligase from Roseiflexus sp. (strain RS-1).